A 633-amino-acid chain; its full sequence is Laccase ARB_05828 (633 aa).

Positions 1–16 (MKRLGLAALYIGSALA) are cleaved as a signal peptide. The propeptide occupies 22–47 (GPPSRNVPRDDFPMFNPLPSTDLNTR). Asparagine 143 carries N-linked (GlcNAc...) asparagine glycosylation. Cu cation contacts are provided by histidine 148, histidine 150, histidine 192, and histidine 194. An intrachain disulfide couples cysteine 169 to cysteine 607. The Plastocyanin-like domain maps to 224–353 (LLMTDHLHSS…GRYWVRTTPA (130 aa)). N-linked (GlcNAc...) asparagine glycans are attached at residues asparagine 286 and asparagine 456. Histidine 508, histidine 511, histidine 513, histidine 568, cysteine 569, histidine 570, and histidine 574 together coordinate Cu cation.

The protein belongs to the multicopper oxidase family. Monomer. The cofactor is Cu cation.

It is found in the secreted. It catalyses the reaction 4 hydroquinone + O2 = 4 benzosemiquinone + 2 H2O. The sequence is that of Laccase ARB_05828 from Arthroderma benhamiae (strain ATCC MYA-4681 / CBS 112371) (Trichophyton mentagrophytes).